Consider the following 467-residue polypeptide: Pentatricopeptide repeat-containing protein At1g77170, mitochondrial (467 aa).

Residues 1–30 (MFFSGLISKLHVHGTKRTNHFTIFHRLNHF) constitute a mitochondrion transit peptide. 9 PPR repeats span residues 81–115 (IAFL…TVLP), 116–150 (DRYS…GFVG), 151–181 (DEFC…NPER), 182–216 (KLGS…GLEP), 217–251 (DDFT…KTEE), 254–284 (DIMM…MRQR), 285–319 (NVVS…GVRP), 320–350 (NKIT…MKSE), and 356–386 (GLSH…MPMK). The tract at residues 391–466 (VWGCLMGGCE…IPAYSYASTT (76 aa)) is type E motif.

The protein belongs to the PPR family. PCMP-E subfamily.

It localises to the mitochondrion. The chain is Pentatricopeptide repeat-containing protein At1g77170, mitochondrial (PCMP-E21) from Arabidopsis thaliana (Mouse-ear cress).